Here is a 248-residue protein sequence, read N- to C-terminus: Triosephosphate isomerase (248 aa).

Residue 9–11 (NWK) coordinates substrate. The active-site Electrophile is the H94. The Proton acceptor role is filled by E166. Substrate contacts are provided by residues G172, S212, and 233–234 (GG).

The protein belongs to the triosephosphate isomerase family. Homodimer.

Its subcellular location is the cytoplasm. It carries out the reaction D-glyceraldehyde 3-phosphate = dihydroxyacetone phosphate. It functions in the pathway carbohydrate biosynthesis; gluconeogenesis. It participates in carbohydrate degradation; glycolysis; D-glyceraldehyde 3-phosphate from glycerone phosphate: step 1/1. Functionally, involved in the gluconeogenesis. Catalyzes stereospecifically the conversion of dihydroxyacetone phosphate (DHAP) to D-glyceraldehyde-3-phosphate (G3P). This Thermoanaerobacter sp. (strain X514) protein is Triosephosphate isomerase.